Consider the following 358-residue polypeptide: MHAIGLMSGTSLDGVDAAVIETDGERVFGTGRSATLFYEDGLRARLRALLDAAPGLAPDDPELLSLDWLLADRHAEAVAMVASRADVVGFHGQTILHDPDRRRTWQIGDAAHLAHKTRLPVVHDFRSADVAAGGQGAPLAPLFHAALAEALEKPLLVVNIGGVANITWLGPTGEVLACDTGPGNGPLDDWVRLHTGAAFDADGALAAAGRVDQARLTRLMDDPWFARPAPKSLDRLQFSARVAAATEGLSAADGAALLVAFTAAAIAAAPLPAPPRRVLVAGGGRHNAAIMDALRRHFAAPVEPVEAVGWDGDALEAQCFGFLAVRALRGLPLSLPETTGVPAPLAGGRIVRPGPAAE.

9-16 (GTSLDGVD) provides a ligand contact to ATP.

It belongs to the anhydro-N-acetylmuramic acid kinase family.

It carries out the reaction 1,6-anhydro-N-acetyl-beta-muramate + ATP + H2O = N-acetyl-D-muramate 6-phosphate + ADP + H(+). Its pathway is amino-sugar metabolism; 1,6-anhydro-N-acetylmuramate degradation. It functions in the pathway cell wall biogenesis; peptidoglycan recycling. Its function is as follows. Catalyzes the specific phosphorylation of 1,6-anhydro-N-acetylmuramic acid (anhMurNAc) with the simultaneous cleavage of the 1,6-anhydro ring, generating MurNAc-6-P. Is required for the utilization of anhMurNAc either imported from the medium or derived from its own cell wall murein, and thus plays a role in cell wall recycling. The chain is Anhydro-N-acetylmuramic acid kinase from Acidiphilium cryptum (strain JF-5).